A 121-amino-acid polypeptide reads, in one-letter code: Ribosome-binding factor A (121 aa).

This sequence belongs to the RbfA family. Monomer. Binds 30S ribosomal subunits, but not 50S ribosomal subunits or 70S ribosomes.

The protein localises to the cytoplasm. Its function is as follows. One of several proteins that assist in the late maturation steps of the functional core of the 30S ribosomal subunit. Associates with free 30S ribosomal subunits (but not with 30S subunits that are part of 70S ribosomes or polysomes). Required for efficient processing of 16S rRNA. May interact with the 5'-terminal helix region of 16S rRNA. This Agathobacter rectalis (strain ATCC 33656 / DSM 3377 / JCM 17463 / KCTC 5835 / VPI 0990) (Eubacterium rectale) protein is Ribosome-binding factor A.